The following is a 491-amino-acid chain: Serine/threonine-protein kinase 33 (491 aa).

The interval 51-89 (FASQERKKERNTSRESSLKDLSIRTSNVERKPQAQWSRS) is disordered. The segment covering 54–82 (QERKKERNTSRESSLKDLSIRTSNVERKP) has biased composition (basic and acidic residues). A Protein kinase domain is found at 111 to 377 (YTFGRILGQG…AKELLDNQWL (267 aa)). ATP is bound by residues 117 to 125 (LGQGSFGMV) and Lys-140. Asp-233 serves as the catalytic Proton acceptor. The interval 398–491 (KNNPESDEET…TTLFRGKKRL (94 aa)) is disordered. Residues 402–414 (ESDEETNTDEETE) show a composition bias toward acidic residues. The residue at position 403 (Ser-403) is a Phosphoserine. The span at 415–431 (QSAVYSPSANTAKQPTN) shows a compositional bias: polar residues. A compositionally biased stretch (low complexity) spans 445–457 (SSNSSSSKLLSAE). Polar residues predominate over residues 475-484 (AKTTLKSTTL).

Belongs to the protein kinase superfamily. CAMK Ser/Thr protein kinase family. CaMK subfamily. In terms of assembly, homodimer. In terms of processing, autophosphorylated. In terms of tissue distribution, highly expressed in testis, particularly in cells from the spermatogenic epithelia. Present in meiotic and post meiotic sperm cells. Significant expression is detected in lung epithelia, alveolar macrophages, horizontal cells in the retina and in embryonic organs such as heart, brain and spinal cord. Also expressed in pituitary gland, kidney, pancreas, trachea and thyroid gland.

It localises to the cytoplasm. It is found in the cytoskeleton. The protein localises to the perinuclear region. The enzyme catalyses L-seryl-[protein] + ATP = O-phospho-L-seryl-[protein] + ADP + H(+). It catalyses the reaction L-threonyl-[protein] + ATP = O-phospho-L-threonyl-[protein] + ADP + H(+). With respect to regulation, specifically inhibited by CDD-2807 ((3-([1,1'-Biphenyl]-2-ylethynyl)-1H-indazol-5-yl)(2,6-diazaspiro[3.5]nonan-2-yl)methanone). CDD-2807 is a potential male contraceptive drug: it is not toxic, efficiently crosses the blood-testis barrier and induces a reversible contraceptive effect in male mice. In terms of biological role, serine/threonine protein kinase required for spermatid differentiation and male fertility. Promotes sperm flagella assembly during spermatogenesis by mediating phosphorylation of fibrous sheath proteins AKAP3 and AKAP4. Also phosphorylates vimentin/VIM, thereby regulating the dynamic behavior of the intermediate filament cytoskeleton. The polypeptide is Serine/threonine-protein kinase 33 (Mus musculus (Mouse)).